Here is a 173-residue protein sequence, read N- to C-terminus: NEDD4-binding protein 2-like 1 (173 aa).

Residues 1–35 are disordered; it reads MEESFLESFGRLSLRQQQPPPPRPPAPPPLRGTPP. A compositionally biased stretch (pro residues) spans 18–32; that stretch reads QPPPPRPPAPPPLRG.

As to quaternary structure, interacts with dynactin subunit proteins, including DCTN4, DCTN5 and DCTN5.

Functionally, might play a role in adipocyte differentiation and triglyceride accumulation. The sequence is that of NEDD4-binding protein 2-like 1 (N4BP2L1) from Bos taurus (Bovine).